The chain runs to 738 residues: Catalase-peroxidase (738 aa).

The interval 1–24 (MSEEHPPIAEANSQPSNGCPVAGG) is disordered. A cross-link (tryptophyl-tyrosyl-methioninium (Trp-Tyr) (with M-257)) is located at residues 108-231 (WHAAGTYRVG…LAAVQMGLIY (124 aa)). His-109 (proton acceptor) is an active-site residue. A cross-link (tryptophyl-tyrosyl-methioninium (Tyr-Met) (with W-108)) is located at residues 231–257 (YVNPEGPNGNPDPLAAAIDIRETFGRM). His-272 contacts heme b.

This sequence belongs to the peroxidase family. Peroxidase/catalase subfamily. As to quaternary structure, homodimer or homotetramer. Heme b is required as a cofactor. Post-translationally, formation of the three residue Trp-Tyr-Met cross-link is important for the catalase, but not the peroxidase activity of the enzyme.

It catalyses the reaction H2O2 + AH2 = A + 2 H2O. The enzyme catalyses 2 H2O2 = O2 + 2 H2O. Functionally, bifunctional enzyme with both catalase and broad-spectrum peroxidase activity. The polypeptide is Catalase-peroxidase (Mycobacteroides abscessus (strain ATCC 19977 / DSM 44196 / CCUG 20993 / CIP 104536 / JCM 13569 / NCTC 13031 / TMC 1543 / L948) (Mycobacterium abscessus)).